The chain runs to 230 residues: Nicotinamide riboside kinase 2 (230 aa).

9-17 (GMTNGGKTT) is an ATP binding site. 2 residues coordinate Mg(2+): T16 and D35. D35 serves as the catalytic Proton acceptor. Substrate-binding positions include 35-38 (DDFF) and 54-55 (WD). ATP is bound at residue R130. Substrate is bound by residues R131 and 136-137 (YT). ATP is bound by residues 134 to 136 (RNY) and 174 to 176 (KSR). A disordered region spans residues 191–230 (LLNRSQESAPSPARPARTQGPGRGCGHRTARPAASQQDSM).

This sequence belongs to the uridine kinase family. NRK subfamily. In terms of assembly, monomer. Interacts with ITGB1 alone or when associated with alpha-7, but not with alpha-5. Predominantly expressed in skeletal muscle and, at a much lower level, in the heart (at protein level). No expression in brain, kidney, liver, lung, pancreas nor placenta.

It carries out the reaction beta-nicotinamide D-riboside + ATP = beta-nicotinamide D-ribonucleotide + ADP + H(+). It catalyses the reaction beta-D-ribosylnicotinate + ATP = nicotinate beta-D-ribonucleotide + ADP + H(+). Its pathway is cofactor biosynthesis; NAD(+) biosynthesis. Its function is as follows. Catalyzes the phosphorylation of nicotinamide riboside (NR) and nicotinic acid riboside (NaR) to form nicotinamide mononucleotide (NMN) and nicotinic acid mononucleotide (NaMN). Reduces laminin matrix deposition and cell adhesion to laminin, but not to fibronectin. Involved in the regulation of PXN at the protein level and of PXN tyrosine phosphorylation. May play a role in the regulation of terminal myogenesis. The polypeptide is Nicotinamide riboside kinase 2 (NMRK2) (Homo sapiens (Human)).